The sequence spans 105 residues: Malonate decarboxylase acyl carrier protein (105 aa).

Residue Ser-28 is modified to O-(phosphoribosyl dephospho-coenzyme A)serine.

Belongs to the MdcC family. Post-translationally, covalently binds the prosthetic group of malonate decarboxylase.

It is found in the cytoplasm. Its function is as follows. Subunit of malonate decarboxylase, it is an acyl carrier protein to which acetyl and malonyl thioester residues are bound via a 2'-(5''-phosphoribosyl)-3'-dephospho-CoA prosthetic group and turn over during the catalytic mechanism. The chain is Malonate decarboxylase acyl carrier protein from Xanthomonas axonopodis pv. citri (strain 306).